Reading from the N-terminus, the 175-residue chain is Large ribosomal subunit protein uL6 (175 aa).

It belongs to the universal ribosomal protein uL6 family. In terms of assembly, part of the 50S ribosomal subunit.

Its function is as follows. This protein binds to the 23S rRNA, and is important in its secondary structure. It is located near the subunit interface in the base of the L7/L12 stalk, and near the tRNA binding site of the peptidyltransferase center. This Xylella fastidiosa (strain 9a5c) protein is Large ribosomal subunit protein uL6.